Consider the following 40-residue polypeptide: Antifungal protein ginkbilobin-1 (40 aa).

Residues 3-40 (TAFVSSAHNTQKIPAGAPFNRNLRAMLADLRQNAAFAG) form the Gnk2-homologous domain. An alpha-D-mannopyranose-binding site is contributed by asparagine 11.

Expressed in seeds (at the protein level).

In terms of biological role, possesses antifungal activity against B.cinerea, M.arachidicola, F.oxysporum, R.solani and C.comatus and moderate antibacterial activity against S.aureus, P.aeruginosa and E.coli. Inhibits HIV-1 reverse transcriptase and proliferation of murine splenocytes. Exerts antifungal activity through its carbohydrate-binding specificity. The chain is Antifungal protein ginkbilobin-1 from Ginkgo biloba (Ginkgo).